Reading from the N-terminus, the 573-residue chain is Kinesin light chain 1 (573 aa).

The stretch at 27 to 156 (KTKQVIQGLE…HLEFMNQLKK (130 aa)) forms a coiled coil. The span at 155 to 176 (KKYDDDISPSEDKDTDSTKEPL) shows a compositional bias: basic and acidic residues. The tract at residues 155–203 (KKYDDDISPSEDKDTDSTKEPLDDLFPNDEDDPGQGIQQQHSSAAAAAQ) is disordered. S162 is modified (phosphoserine). A compositionally biased stretch (low complexity) spans 188–203 (GQGIQQQHSSAAAAAQ). TPR repeat units lie at residues 213-246 (LRTL…LEKT), 255-288 (ATML…REKT), 297-330 (AATL…REKV), 339-372 (AKQL…YQTK), and 381-414 (AKTK…AHER). Y449 bears the Phosphotyrosine mark. A Phosphoserine modification is found at S460. A TPR 6 repeat occupies 464–497 (TTTLKNLGALYRRQGKFEAAETLEEAAMRSRKQG). Residues S521 and S524 each carry the phosphoserine; by AMPK modification. E547 is subject to Phosphoserine. A disordered region spans residues 553 to 573 (SGRASFCGKRQQQQWPGRRHR).

This sequence belongs to the kinesin light chain family. Oligomeric complex composed of two heavy chains and two light chains. Interacts with SPAG9. Interacts with ATCAY; may link mitochondria to KLC1 and regulate mitochondria localization into neuron projections. Interacts (via TPR repeats) with TOR1A; the interaction associates TOR1A with the kinesin oligomeric complex. Interacts with BORCS5. Interacts with MAPK8IP3/JIP3 and NTRK2/TRKB; interaction with NTRK2/TRKB is mediated by MAPK8IP3/JIP3. Interacts with CLSTN1; phosphorylation at Ser-460 inhibits interaction with CLSTN1. In terms of assembly, (Microbial infection) Interacts with adenovirus hexon-interlacing protein; this interaction leads to capsid disruption at the nuclear pore complex during virus entry into host cell. Post-translationally, phosphorylation at Ser-460 by ERK inhibits interaction with CLSTN1 and localization to cytoplasmic vesicles. As to expression, found in a variety of tissues. Mostly abundant in brain and spine.

The protein localises to the cell projection. It localises to the growth cone. Its subcellular location is the cytoplasmic vesicle. It is found in the cytoplasm. The protein resides in the cytoskeleton. In terms of biological role, kinesin is a microtubule-associated force-producing protein that may play a role in organelle transport. The light chain may function in coupling of cargo to the heavy chain or in the modulation of its ATPase activity. In Homo sapiens (Human), this protein is Kinesin light chain 1 (KLC1).